Reading from the N-terminus, the 445-residue chain is Chromosomal replication initiator protein DnaA (445 aa).

Positions 1–73 (MSTHLTETWE…VNALKLLTSK (73 aa)) are domain I, interacts with DnaA modulators. The segment at 73-106 (KKYNIDFIVTTEEKIEKNHNNEKSNIVVNDEMST) is domain II. Positions 107–323 (MLNPKYTFDS…GALIRIVAFS (217 aa)) are domain III, AAA+ region. The ATP site is built by G151, G153, K154, and T155. Residues 324–445 (SLTNKEISVD…KELNKRINQK (122 aa)) form a domain IV, binds dsDNA region.

Belongs to the DnaA family. As to quaternary structure, oligomerizes as a right-handed, spiral filament on DNA at oriC.

The protein resides in the cytoplasm. Its function is as follows. Plays an essential role in the initiation and regulation of chromosomal replication. ATP-DnaA binds to the origin of replication (oriC) to initiate formation of the DNA replication initiation complex once per cell cycle. Binds the DnaA box (a 9 base pair repeat at the origin) and separates the double-stranded (ds)DNA. Forms a right-handed helical filament on oriC DNA; dsDNA binds to the exterior of the filament while single-stranded (ss)DNA is stabiized in the filament's interior. The ATP-DnaA-oriC complex binds and stabilizes one strand of the AT-rich DNA unwinding element (DUE), permitting loading of DNA polymerase. After initiation quickly degrades to an ADP-DnaA complex that is not apt for DNA replication. Binds acidic phospholipids. The chain is Chromosomal replication initiator protein DnaA from Clostridium botulinum (strain Okra / Type B1).